The primary structure comprises 28 residues: Short cationic peptide-1c (28 aa).

Glutamic acid 1-amide is present on glutamate 28.

As to expression, expressed by the venom gland.

It is found in the secreted. In Cupiennius salei (American wandering spider), this protein is Short cationic peptide-1c.